A 360-amino-acid chain; its full sequence is Inward rectifier potassium channel 13 (360 aa).

The Cytoplasmic portion of the chain corresponds to M1 to D50. Residues M51–A77 traverse the membrane as a helical segment. Residues V78–S105 are Extracellular-facing. The segment at residues F106 to Y122 is an intramembrane region (helical; Pore-forming). The short motif at T119 to T124 is the Selectivity filter element. The Extracellular segment spans residues G123–C131. The helical transmembrane segment at P132–V157 threads the bilayer. Topologically, residues A158 to E360 are cytoplasmic. S201 bears the Phosphoserine; by PKC mark. A Phosphoserine; by PKA modification is found at S287.

Belongs to the inward rectifier-type potassium channel (TC 1.A.2.1) family. KCNJ13 subfamily. As to quaternary structure, homotetramer. Interacts with RAB28; the interaction may facilitate cone outer segments phagocytosis. In terms of processing, phosphorylation at Ser-201 by PKC strongly inhibits ionic currents, while phosphorylation at Ser-287 by PKA increases them.

It localises to the membrane. Its subcellular location is the cell membrane. The catalysed reaction is K(+)(in) = K(+)(out). With respect to regulation, inhibited by Ba(2+) and Cs(+), although sensitivity to those inhibitors is much lower than in other Kir channels. Inward rectifier potassium channels are characterized by a greater tendency to allow potassium to flow into the cell rather than out of it. Their voltage dependence is regulated by the concentration of extracellular potassium; as external potassium is raised, the voltage range of the channel opening shifts to more positive voltages. The inward rectification is mainly due to the blockage of outward current by internal magnesium. KCNJ13 has a very low single channel conductance, low sensitivity to block by external barium and cesium, and no dependence of its inward rectification properties on the internal blocking particle magnesium. This chain is Inward rectifier potassium channel 13 (Kcnj13), found in Rattus norvegicus (Rat).